A 219-amino-acid polypeptide reads, in one-letter code: uncharacterized protein (219 aa).

This is an uncharacterized protein from Methanocaldococcus jannaschii (strain ATCC 43067 / DSM 2661 / JAL-1 / JCM 10045 / NBRC 100440) (Methanococcus jannaschii).